The sequence spans 752 residues: MEDLSAPESALFQGGHTLLPSASFQESVTFKDVIVDFTQEEWKQLDPVQRGLFRDVTLENYTHLVSIGLQVSKPDVISQLEQGTEPWIVEPSIPVGTPGDWVTRPENSITASELDISGEEPSPGAVAEKHKRDDPWSTNFLETCESKGSPERQQANKQTLPREIKITEKTIPTLEQAHVNNDFEKSISVSLDLLTHKQISPKQTSTKTNVKQNLNPVKKEKSCKCNECGKAFTYCSALIRHQRTHTGEKPYKCNECEKAFSRSENLINHQRIHTGDKPYKCDQCGKGFIEGPSLTQHQRIHTGEKPYKCDECGKAFSQRTHLVQHQRIHTGEKPYTCNECGKAFSQRGHFMEHQKIHTGEKPFKCDECDKTFTRSTHLTQHQKIHTGEKTYKCNECGKAFNGPSTFIRHHMIHTGEKPYECNECGKAFSQHSNLTQHQKTHTGEKPYDCAECGKSFSYWSSLAQHLKIHTGEKPYKCNECGKAFSYCSSLTQHRRIHTREKPFECSECGKAFSYLSNLNQHQKTHTQEKAYECKECGKAFIRSSSLAKHERIHTGEKPYQCHECGKTFSYGSSLIQHRKIHTGERPYKCNECGRAFNQNIHLTQHKRIHTGAKPYECAECGKAFRHCSSLAQHQKTHTEEKPYHCNKCEKAFSQSSHLAQHQRIHTGEKPYKCNECDKTFSRSTHLTEHQNTHTGEKPYNCNECRKTFSQSTYLIQHQRIHSAEKPFGCNDCGKAFRYRSALNKHQRLHPGI.

One can recognise a KRAB domain in the interval 28–99 (VTFKDVIVDF…EPSIPVGTPG (72 aa)). A phosphoserine mark is found at serine 117, serine 122, and serine 200. Lysine 207 is covalently cross-linked (Glycyl lysine isopeptide (Lys-Gly) (interchain with G-Cter in SUMO2)). 19 consecutive C2H2-type zinc fingers follow at residues 223-245 (CKCNECGKAFTYCSALIRHQRTH), 251-273 (YKCNECEKAFSRSENLINHQRIH), 279-301 (YKCDQCGKGFIEGPSLTQHQRIH), 307-329 (YKCDECGKAFSQRTHLVQHQRIH), 335-357 (YTCNECGKAFSQRGHFMEHQKIH), 363-385 (FKCDECDKTFTRSTHLTQHQKIH), 391-413 (YKCNECGKAFNGPSTFIRHHMIH), 419-441 (YECNECGKAFSQHSNLTQHQKTH), 447-469 (YDCAECGKSFSYWSSLAQHLKIH), 475-497 (YKCNECGKAFSYCSSLTQHRRIH), 503-525 (FECSECGKAFSYLSNLNQHQKTH), 531-553 (YECKECGKAFIRSSSLAKHERIH), 559-581 (YQCHECGKTFSYGSSLIQHRKIH), 587-609 (YKCNECGRAFNQNIHLTQHKRIH), 615-637 (YECAECGKAFRHCSSLAQHQKTH), 643-665 (YHCNKCEKAFSQSSHLAQHQRIH), 671-693 (YKCNECDKTFSRSTHLTEHQNTH), 699-721 (YNCNECRKTFSQSTYLIQHQRIH), and 727-749 (FGCNDCGKAFRYRSALNKHQRLH).

The protein belongs to the krueppel C2H2-type zinc-finger protein family.

It localises to the nucleus. Its function is as follows. May be involved in transcriptional regulation. In Bos taurus (Bovine), this protein is Zinc finger protein 184 (ZNF184).